Reading from the N-terminus, the 107-residue chain is U1-lycotoxin-Ls1l (107 aa).

The first 20 residues, 1 to 20, serve as a signal peptide directing secretion; sequence MMKVLVVVALLVTLISYSSS. The propeptide occupies 21 to 41; the sequence is EGIDDLEADELLSLMANEQTR. 4 disulfide bridges follow: C44–C59, C51–C68, C58–C86, and C70–C84.

The protein belongs to the neurotoxin 19 (CSTX) family. 04 (U1-Lctx) subfamily. As to expression, expressed by the venom gland.

It localises to the secreted. This Lycosa singoriensis (Wolf spider) protein is U1-lycotoxin-Ls1l.